Here is a 362-residue protein sequence, read N- to C-terminus: Peptide chain release factor 1 (362 aa).

N5-methylglutamine is present on Gln237.

It belongs to the prokaryotic/mitochondrial release factor family. Methylated by PrmC. Methylation increases the termination efficiency of RF1.

It localises to the cytoplasm. Its function is as follows. Peptide chain release factor 1 directs the termination of translation in response to the peptide chain termination codons UAG and UAA. This is Peptide chain release factor 1 from Aliivibrio salmonicida (strain LFI1238) (Vibrio salmonicida (strain LFI1238)).